The primary structure comprises 164 residues: Large ribosomal subunit protein uL10 (164 aa).

The protein belongs to the universal ribosomal protein uL10 family. In terms of assembly, part of the ribosomal stalk of the 50S ribosomal subunit. The N-terminus interacts with L11 and the large rRNA to form the base of the stalk. The C-terminus forms an elongated spine to which L12 dimers bind in a sequential fashion forming a multimeric L10(L12)X complex.

Functionally, forms part of the ribosomal stalk, playing a central role in the interaction of the ribosome with GTP-bound translation factors. This is Large ribosomal subunit protein uL10 from Helicobacter pylori (strain G27).